Here is a 271-residue protein sequence, read N- to C-terminus: Repressed by EFG1 protein 1 (271 aa).

The signal sequence occupies residues 1–19 (MKITNTLLNAAALLAVTEA). The interval 59 to 118 (QLTSKTQDSTSPTTSSVNSLTSSSATSYVETTTPAPSSSTLTTSTISSSTASEDSDATPT) is disordered. Positions 67–118 (STSPTTSSVNSLTSSSATSYVETTTPAPSSSTLTTSTISSSTASEDSDATPT) are enriched in low complexity. One can recognise an SCP domain in the interval 128–244 (LKEHNVKRAL…AWRQITVCEY (117 aa)). Residue Asn254 is glycosylated (N-linked (GlcNAc...) asparagine).

The protein belongs to the CRISP family.

It is found in the secreted. Its subcellular location is the cell wall. In terms of biological role, cell wall protein involved in cell wall integrity and which plays a role in virulence. The sequence is that of Repressed by EFG1 protein 1 (RBE1) from Candida albicans (strain SC5314 / ATCC MYA-2876) (Yeast).